A 576-amino-acid chain; its full sequence is Mitogen-activated protein kinase 15 (576 aa).

A disordered region spans residues 20 to 50 (RPSSSSSSNNHDQIQNPPTVSNPNDDEDLKK). Residues 28 to 42 (NNHDQIQNPPTVSNP) show a composition bias toward polar residues. Residues 90–381 (YQIQEVVGKG…AEEALADPYF (292 aa)) form the Protein kinase domain. Residues 96–104 (VGKGSYGVV) and Lys-119 each bind ATP. Residue Asp-216 is the Proton acceptor of the active site. Thr-252 is subject to Phosphothreonine. A TXY motif is present at residues 252 to 254 (TDY). Tyr-254 is subject to Phosphotyrosine. Thr-257 carries the post-translational modification Phosphothreonine. The interval 458–535 (EENQGPGGRS…GGGYSARNLM (78 aa)) is disordered. Over residues 477-501 (LPRERVPASKNETVEERSNDIERRT) the composition is skewed to basic and acidic residues. A compositionally biased stretch (polar residues) spans 504–520 (AVASTLDSPKASQQAEG).

This sequence belongs to the protein kinase superfamily. CMGC Ser/Thr protein kinase family. MAP kinase subfamily. As to quaternary structure, interacts with MKK7. Dually phosphorylated on Thr-252 and Tyr-254, which activates the enzyme.

It catalyses the reaction L-seryl-[protein] + ATP = O-phospho-L-seryl-[protein] + ADP + H(+). It carries out the reaction L-threonyl-[protein] + ATP = O-phospho-L-threonyl-[protein] + ADP + H(+). Its activity is regulated as follows. Activated by threonine and tyrosine phosphorylation. The polypeptide is Mitogen-activated protein kinase 15 (MPK15) (Arabidopsis thaliana (Mouse-ear cress)).